The following is a 224-amino-acid chain: UPF0758 protein Lm4b_01560 (224 aa).

One can recognise an MPN domain in the interval 102 to 224; sequence VVRCPEDAVK…YISLKEKGYF (123 aa). Zn(2+) contacts are provided by H173, H175, and D186. Residues 173–186 carry the JAMM motif motif; that stretch reads HNHPSGDPTPSSED.

Belongs to the UPF0758 family.

The polypeptide is UPF0758 protein Lm4b_01560 (Listeria monocytogenes serotype 4b (strain CLIP80459)).